Reading from the N-terminus, the 329-residue chain is Biotin synthase (329 aa).

The Radical SAM core domain maps to 46–275 (FFGRRLKLVR…LNPKAELRAS (230 aa)). Cys-64, Cys-68, and Cys-71 together coordinate [4Fe-4S] cluster. [2Fe-2S] cluster-binding residues include Cys-108, Cys-140, Cys-200, and Arg-273.

This sequence belongs to the radical SAM superfamily. Biotin synthase family. Homodimer. [4Fe-4S] cluster is required as a cofactor. It depends on [2Fe-2S] cluster as a cofactor.

It catalyses the reaction (4R,5S)-dethiobiotin + (sulfur carrier)-SH + 2 reduced [2Fe-2S]-[ferredoxin] + 2 S-adenosyl-L-methionine = (sulfur carrier)-H + biotin + 2 5'-deoxyadenosine + 2 L-methionine + 2 oxidized [2Fe-2S]-[ferredoxin]. It participates in cofactor biosynthesis; biotin biosynthesis; biotin from 7,8-diaminononanoate: step 2/2. In terms of biological role, catalyzes the conversion of dethiobiotin (DTB) to biotin by the insertion of a sulfur atom into dethiobiotin via a radical-based mechanism. In Thermus thermophilus (strain ATCC BAA-163 / DSM 7039 / HB27), this protein is Biotin synthase.